A 689-amino-acid chain; its full sequence is Beta-adrenergic receptor kinase 1 (689 aa).

The tract at residues 1–190 (MADLEAVLAD…ELNIHLTMND (190 aa)) is N-terminal. The region spanning 54–175 (TFEKIFSQKL…IESDKFTRFC (122 aa)) is the RGS domain. In terms of domain architecture, Protein kinase spans 191–453 (FSVHRIIGRG…AQEVKESPFF (263 aa)). ATP contacts are provided by residues 197–205 (IGRGGFGEV) and Lys220. Residue Asp317 is the Proton acceptor of the active site. Positions 454-521 (RSLDWQMVFL…TISERWQQEV (68 aa)) constitute an AGC-kinase C-terminal domain. The PH domain occupies 558–652 (DCIVHGYMSK…WKKELRDAYR (95 aa)). Ser670 bears the Phosphoserine mark.

This sequence belongs to the protein kinase superfamily. AGC Ser/Thr protein kinase family. GPRK subfamily. As to quaternary structure, interacts with the heterodimer formed by GNB1 and GNG2. Interacts with GIT1. Interacts with, and phosphorylates chemokine-stimulated CCR5. Interacts with ARRB1. Interacts with LPAR1 and LPAR2. Interacts with RALA in response to LPAR1 activation. ADRBK1 and RALA mutually inhibit each other's binding to LPAR1. Interacts with ADRB2.

Its subcellular location is the cytoplasm. The protein resides in the cell membrane. It is found in the postsynapse. The protein localises to the presynapse. The enzyme catalyses [beta-adrenergic receptor] + ATP = [beta-adrenergic receptor]-phosphate + ADP + H(+). Its activity is regulated as follows. In contrast to other AGC family kinases, the catalytic activity is solely regulated by the binding of substrates and ligands, not by phosphorylation of the kinase domain. Specifically phosphorylates the agonist-occupied form of the beta-adrenergic and closely related receptors, probably inducing a desensitization of them. Key regulator of LPAR1 signaling. Competes with RALA for binding to LPAR1 thus affecting the signaling properties of the receptor. Desensitizes LPAR1 and LPAR2 in a phosphorylation-independent manner. Positively regulates ciliary smoothened (SMO)-dependent Hedgehog (Hh) signaling pathway by facilitating the trafficking of SMO into the cilium and the stimulation of SMO activity. Inhibits relaxation of airway smooth muscle in response to blue light. The polypeptide is Beta-adrenergic receptor kinase 1 (Mus musculus (Mouse)).